A 449-amino-acid chain; its full sequence is Glutamyl-tRNA(Gln) amidotransferase subunit A (449 aa).

Residues K51 and S126 each act as charge relay system in the active site. Residues 103-128 (STTESSAHGKTLNPVDSSRVPGGSSG) form a disordered region. The span at 119 to 128 (SSRVPGGSSG) shows a compositional bias: low complexity. Catalysis depends on S150, which acts as the Acyl-ester intermediate.

It belongs to the amidase family. GatA subfamily. As to quaternary structure, heterotrimer of A, B and C subunits.

It carries out the reaction L-glutamyl-tRNA(Gln) + L-glutamine + ATP + H2O = L-glutaminyl-tRNA(Gln) + L-glutamate + ADP + phosphate + H(+). Functionally, allows the formation of correctly charged Gln-tRNA(Gln) through the transamidation of misacylated Glu-tRNA(Gln) in organisms which lack glutaminyl-tRNA synthetase. The reaction takes place in the presence of glutamine and ATP through an activated gamma-phospho-Glu-tRNA(Gln). This Wolinella succinogenes (strain ATCC 29543 / DSM 1740 / CCUG 13145 / JCM 31913 / LMG 7466 / NCTC 11488 / FDC 602W) (Vibrio succinogenes) protein is Glutamyl-tRNA(Gln) amidotransferase subunit A.